Here is a 466-residue protein sequence, read N- to C-terminus: Cocosin 1 (466 aa).

Positions 1–22 (MGSSSLLSFSLCLLLLCHLSQA) are cleaved as a signal peptide. 2 disulfides stabilise this stretch: C45–C78 and C121–C288. Cupin type-1 domains lie at 50–242 (LNAL…ELAR) and 294–443 (QNIG…DEAR).

It belongs to the 11S seed storage protein (globulins) family. Hexamer; each subunit is composed of an acidic and a basic chain derived from a single precursor and linked by a disulfide bond. In terms of tissue distribution, endosperm of the seeds.

Functionally, seed storage protein. This Cocos nucifera (Coconut palm) protein is Cocosin 1.